The primary structure comprises 295 residues: MMRIVLFLLTNLAVMLVFGIILSLTGIQGSSVQGLMIMAGLFGFGGAFVSLLMSKWMALRSVGGQVIEQPANEVEHWLVETVRSQAEQVNIAMPQVAIYAAPDINAFATGARRNASLVAVSSGLLDNMSRAEAEAVIAHEISHIANGDMVTMTLLQGIVNTFVIFISRLLAQAVSSFLSGNSDEEESNSSGNPIVYMVASMVLEIVFGILASIITMWFSRYREFHADAGSAKLVGREKMIAALQRLKTSYEPQEEGGMMAFCINGKSKTFSELFMSHPPLDKRIEALRSGQYLNK.

2 helical membrane passes run 4–24 and 34–54; these read IVLFLLTNLAVMLVFGIILSL and GLMIMAGLFGFGGAFVSLLMS. H139 contributes to the Zn(2+) binding site. E140 is a catalytic residue. H143 contributes to the Zn(2+) binding site. A run of 2 helical transmembrane segments spans residues 147 to 167 and 194 to 214; these read GDMVTMTLLQGIVNTFVIFIS and IVYMVASMVLEIVFGILASII. A Zn(2+)-binding site is contributed by E223.

It belongs to the peptidase M48B family. It depends on Zn(2+) as a cofactor.

The protein localises to the cell inner membrane. The protein is Protease HtpX of Photorhabdus laumondii subsp. laumondii (strain DSM 15139 / CIP 105565 / TT01) (Photorhabdus luminescens subsp. laumondii).